The following is a 471-amino-acid chain: Glutamate--tRNA ligase (471 aa).

The 'HIGH' region motif lies at 9–19 (PSPTGYLHVGG). Residues Cys98, Cys100, Cys125, and His127 each coordinate Zn(2+). The 'KMSKS' region signature appears at 237 to 241 (KLSKR). Lys240 lines the ATP pocket.

It belongs to the class-I aminoacyl-tRNA synthetase family. Glutamate--tRNA ligase type 1 subfamily. Monomer. The cofactor is Zn(2+).

It is found in the cytoplasm. The enzyme catalyses tRNA(Glu) + L-glutamate + ATP = L-glutamyl-tRNA(Glu) + AMP + diphosphate. Functionally, catalyzes the attachment of glutamate to tRNA(Glu) in a two-step reaction: glutamate is first activated by ATP to form Glu-AMP and then transferred to the acceptor end of tRNA(Glu). The polypeptide is Glutamate--tRNA ligase (Escherichia coli O9:H4 (strain HS)).